A 345-amino-acid polypeptide reads, in one-letter code: Phosphoribosylformylglycinamidine cyclo-ligase (345 aa).

It belongs to the AIR synthase family.

Its subcellular location is the cytoplasm. The catalysed reaction is 2-formamido-N(1)-(5-O-phospho-beta-D-ribosyl)acetamidine + ATP = 5-amino-1-(5-phospho-beta-D-ribosyl)imidazole + ADP + phosphate + H(+). The protein operates within purine metabolism; IMP biosynthesis via de novo pathway; 5-amino-1-(5-phospho-D-ribosyl)imidazole from N(2)-formyl-N(1)-(5-phospho-D-ribosyl)glycinamide: step 2/2. The protein is Phosphoribosylformylglycinamidine cyclo-ligase of Lactobacillus acidophilus (strain ATCC 700396 / NCK56 / N2 / NCFM).